The chain runs to 865 residues: Adenylate cyclase (865 aa).

The tract at residues 1 to 540 (MYLYIETLKQ…DISSHFPIRL (540 aa)) is catalytic. The regulatory stretch occupies residues 546–865 (KALYSPCEIR…FNDYQAVHHH (320 aa)).

The protein belongs to the adenylyl cyclase class-1 family.

It is found in the cytoplasm. It catalyses the reaction ATP = 3',5'-cyclic AMP + diphosphate. This is Adenylate cyclase (cya) from Proteus mirabilis.